The sequence spans 258 residues: Imidazole glycerol phosphate synthase subunit HisF (258 aa).

Active-site residues include Asp11 and Asp130.

It belongs to the HisA/HisF family. As to quaternary structure, heterodimer of HisH and HisF.

The protein resides in the cytoplasm. The catalysed reaction is 5-[(5-phospho-1-deoxy-D-ribulos-1-ylimino)methylamino]-1-(5-phospho-beta-D-ribosyl)imidazole-4-carboxamide + L-glutamine = D-erythro-1-(imidazol-4-yl)glycerol 3-phosphate + 5-amino-1-(5-phospho-beta-D-ribosyl)imidazole-4-carboxamide + L-glutamate + H(+). It participates in amino-acid biosynthesis; L-histidine biosynthesis; L-histidine from 5-phospho-alpha-D-ribose 1-diphosphate: step 5/9. Functionally, IGPS catalyzes the conversion of PRFAR and glutamine to IGP, AICAR and glutamate. The HisF subunit catalyzes the cyclization activity that produces IGP and AICAR from PRFAR using the ammonia provided by the HisH subunit. This Pectobacterium carotovorum subsp. carotovorum (strain PC1) protein is Imidazole glycerol phosphate synthase subunit HisF.